Consider the following 42-residue polypeptide: Fungal defensin eurocin (42 aa).

4 residues coordinate beta-D-GlcNAc-(1-&gt;4)-Mur2Ac(oyl-L-Ala-gamma-D-Glu-L-Lys-D-Ala-D-Ala)-di-trans,octa-cis-undecaprenyl diphosphate: Phe2, Gly3, Cys4, and His14. 3 disulfides stabilise this stretch: Cys4/Cys27, Cys11/Cys38, and Cys15/Cys40. Residues 31-35 (WYLGH) form an interaction site with membranes lipids region. Cys38 is a beta-D-GlcNAc-(1-&gt;4)-Mur2Ac(oyl-L-Ala-gamma-D-Glu-L-Lys-D-Ala-D-Ala)-di-trans,octa-cis-undecaprenyl diphosphate binding site.

It belongs to the invertebrate defensin family.

It localises to the secreted. The protein resides in the target cell membrane. Functionally, antimicrobial peptide that acts against Gram-positive bacteria but not against Gram-negative bacteria. It selectively inhibits peptidoglycan biosynthesis through complex formation with the cell wall precursor lipid II (1:1 molar ratio) thus inhibiting cell wall synthesis. It does not disrupt cell membranes. In vivo, is effective against an intraperitoneal infection with S.pneumoniae. In vitro, it shows very low hemolytic and cytolytic activities. This Aspergillus amstelodami protein is Fungal defensin eurocin.